A 394-amino-acid chain; its full sequence is NADH dehydrogenase [ubiquinone] iron-sulfur protein 2 (394 aa).

The protein belongs to the complex I 49 kDa subunit family. Complex I is composed of at least 49 different subunits. This is a component of the iron-sulfur (IP) fragment of the enzyme.

Its subcellular location is the mitochondrion. The catalysed reaction is a ubiquinone + NADH + 5 H(+)(in) = a ubiquinol + NAD(+) + 4 H(+)(out). Its function is as follows. Core subunit of the mitochondrial membrane respiratory chain NADH dehydrogenase (Complex I) that is believed to belong to the minimal assembly required for catalysis. Complex I functions in the transfer of electrons from NADH to the respiratory chain. The immediate electron acceptor for the enzyme is believed to be ubiquinone. Component of the iron-sulfur (IP) fragment of the enzyme. The polypeptide is NADH dehydrogenase [ubiquinone] iron-sulfur protein 2 (NAD7) (Arabidopsis thaliana (Mouse-ear cress)).